The chain runs to 452 residues: Sensor histidine kinase HprS (452 aa).

Residues 1–9 (MKRLSITVR) are Cytoplasmic-facing. Residues 10–30 (LTLLFILLLSVAGAGIVWTLY) form a helical membrane-spanning segment. The Periplasmic segment spans residues 31–158 (NGLASELKWR…ARHNMLEQYK (128 aa)). The chain crosses the membrane as a helical span at residues 159-179 (INSIIICIVAIVLCSVLSPLL). At 180–452 (IRTGLREIKK…VFRITLPQRN (273 aa)) the chain is on the cytoplasmic side. Residues 181–234 (RTGLREIKKLSGVTEALNYNDSREPVEVSALPRELKPLGQALNKMHHALVKDFE) enclose the HAMP domain. One can recognise a Histidine kinase domain in the interval 242-452 (DLAHELRTPI…VFRITLPQRN (211 aa)). Phosphohistidine; by autocatalysis is present on His-245.

Autophosphorylated.

It localises to the cell inner membrane. The enzyme catalyses ATP + protein L-histidine = ADP + protein N-phospho-L-histidine.. In terms of biological role, member of a two-component regulatory system HprR/HprS involved in response to hydrogen peroxide. Senses H(2)O(2), maybe via the redox state of the membrane. Activates HprR by phosphorylation. Can also phosphorylate CusR. This is Sensor histidine kinase HprS from Escherichia coli (strain K12).